The following is a 164-amino-acid chain: uncharacterized protein (164 aa).

4 consecutive transmembrane segments (helical) span residues 25 to 45 (QFGF…PLLG), 63 to 83 (GMAV…VYIV), 120 to 140 (FWTA…ADFF), and 141 to 161 (TVQM…LMMM).

Belongs to the major facilitator superfamily.

The protein localises to the cell membrane. This is an uncharacterized protein from Bacillus subtilis (strain 168).